The chain runs to 505 residues: 2-methylcitrate dehydratase (505 aa).

Belongs to the PrpD family. As to quaternary structure, monomer.

It catalyses the reaction (2S,3S)-2-methylcitrate = 2-methyl-cis-aconitate + H2O. It carries out the reaction citrate = D-threo-isocitrate. It functions in the pathway organic acid metabolism; propanoate degradation. The protein operates within carbohydrate metabolism; tricarboxylic acid cycle; isocitrate from oxaloacetate: step 1/2. Its function is as follows. Involved in the catabolism of short chain fatty acids (SCFA) via the tricarboxylic acid (TCA)(acetyl degradation route) and via the 2-methylcitrate cycle I (propionate degradation route). Catalyzes the dehydration of 2-methylcitrate (2-MC) to yield the cis isomer of 2-methyl-aconitate. Could also catalyze the dehydration of citrate and the hydration of cis-aconitate. The sequence is that of 2-methylcitrate dehydratase from Mycobacterium tuberculosis (strain ATCC 35801 / TMC 107 / Erdman).